A 347-amino-acid chain; its full sequence is Gas vesicle ATPase GvpN1 (347 aa).

Residues 1 to 11 show a composition bias toward basic residues; it reads MTNESRKRKVR. A disordered region spans residues 1 to 64; sequence MTNESRKRKV…EGFVPEEQSF (64 aa). Positions 18–55 are enriched in basic and acidic residues; that stretch reads SRGDKKQGRSQSRDDKEIERLERQNDARGQESSTHVDE. 91–98 is a binding site for ATP; sequence GPTGCGKT.

The protein belongs to the CbbQ/NirQ/NorQ/GpvN family. Forms homodimers, forms a GvpN1-GvpO1 heterodimer, interacts with GvpC1 (via the latter's C-terminus) and GvpL, might interact with GvpA1.

It is found in the gas vesicle. The protein resides in the cytoplasm. It carries out the reaction ATP + H2O = ADP + phosphate + H(+). An ATPase that functions in gas vesicle formation. A minor component of the gas vesicle, also found in soluble extracts. Probably enhances gas vesicle formation. Gas vesicles are hollow, gas filled proteinaceous nanostructures found in several microbial planktonic microorganisms. They allow positioning of halobacteria at the optimal depth for growth in the poorly aerated, shallow brine pools of their habitat. In terms of biological role, expression of a 9.5 kb p-vac DNA fragment containing 2 divergently transcribed regions (gvpD-gvpE-gvpF-gvpG-gvpH-gvpI-gvpJ-gvpK-gvpL-gvpM and gvpA-gvpC-gvpN-gvpO) allows H.volcanii to produce gas vesicles. A similar region restores gas vesicle production in H.halobium without the p-vac locus, but which still have the c-vac locus. This is Gas vesicle ATPase GvpN1 (gvpN11) from Halobacterium salinarum (strain ATCC 700922 / JCM 11081 / NRC-1) (Halobacterium halobium).